The chain runs to 100 residues: Probable DNA-binding protein HU (100 aa).

This sequence belongs to the bacterial histone-like protein family.

Functionally, histone-like DNA-binding protein which is capable of wrapping DNA to stabilize it, and thus to prevent its denaturation under extreme environmental conditions. The sequence is that of Probable DNA-binding protein HU (hup) from Chlamydia muridarum (strain MoPn / Nigg).